Here is a 449-residue protein sequence, read N- to C-terminus: tRNA-2-methylthio-N(6)-dimethylallyladenosine synthase (449 aa).

One can recognise an MTTase N-terminal domain in the interval 3 to 124 (KMLYIKTYGC…LPTMLEKLDS (122 aa)). The [4Fe-4S] cluster site is built by C12, C48, C87, C163, C167, and C170. The Radical SAM core domain occupies 149-380 (KSPTVSGLVS…QAQLMLQQLE (232 aa)). The 65-residue stretch at 383–447 (QKLIGKVVPV…ASSLFGEVCP (65 aa)) folds into the TRAM domain.

The protein belongs to the methylthiotransferase family. MiaB subfamily. As to quaternary structure, monomer. [4Fe-4S] cluster is required as a cofactor.

The protein localises to the cytoplasm. It carries out the reaction N(6)-dimethylallyladenosine(37) in tRNA + (sulfur carrier)-SH + AH2 + 2 S-adenosyl-L-methionine = 2-methylsulfanyl-N(6)-dimethylallyladenosine(37) in tRNA + (sulfur carrier)-H + 5'-deoxyadenosine + L-methionine + A + S-adenosyl-L-homocysteine + 2 H(+). Catalyzes the methylthiolation of N6-(dimethylallyl)adenosine (i(6)A), leading to the formation of 2-methylthio-N6-(dimethylallyl)adenosine (ms(2)i(6)A) at position 37 in tRNAs that read codons beginning with uridine. In Orientia tsutsugamushi (strain Boryong) (Rickettsia tsutsugamushi), this protein is tRNA-2-methylthio-N(6)-dimethylallyladenosine synthase.